The chain runs to 341 residues: UDP-glucose 4-epimerase (341 aa).

This sequence belongs to the polysaccharide synthase family.

The catalysed reaction is UDP-alpha-D-glucose = UDP-alpha-D-galactose. Its function is as follows. Epimerizes UDP-galactose to UDP-glucose. This is UDP-glucose 4-epimerase (capD) from Rickettsia akari (strain Hartford).